The sequence spans 216 residues: Thymidylate kinase (216 aa).

ATP is bound at residue 9–16 (GIEGSGKT).

This sequence belongs to the thymidylate kinase family.

It carries out the reaction dTMP + ATP = dTDP + ADP. Its function is as follows. Phosphorylation of dTMP to form dTDP in both de novo and salvage pathways of dTTP synthesis. This Syntrophotalea carbinolica (strain DSM 2380 / NBRC 103641 / GraBd1) (Pelobacter carbinolicus) protein is Thymidylate kinase.